The following is a 623-amino-acid chain: Protein EDS1 (623 aa).

Position 2 is an N-acetylalanine (Ala-2). Catalysis depends on Ser-123, which acts as the Nucleophile. Catalysis depends on charge relay system residues Asp-187 and His-317. The stretch at 358–383 (VQAALEEEKKRVENQKKIIQVIEQER) forms a coiled coil.

In terms of assembly, homodimer. Interacts with RPS4, RPS6, SNC1, SRFR1, AvrRps4 and HopA1. Part of a nuclear complex made of EDS1, PAD4 and SAG101, that can be redirected to the cytoplasm in the presence of an extranuclear form of EDS1. Interacts (via N-terminus) with PAD4 (via N-terminus). Interacts (via N-terminus) with SAG101. EDS1-SAG101 and EDS1-PAD4 form separate complexes in pathogen-unchallenged cells. Part of a nuclear protein complex made of VICTR, PAD4 and EDS1. Interacts with VICTR.

The protein localises to the nucleus. Its subcellular location is the cytoplasm. It localises to the microsome. In terms of biological role, positive regulator of basal resistance and of effector-triggered immunity specifically mediated by TIR-NB-LRR (TNL) resistance proteins. Disruption by bacterial effector of EDS1-TIR-NB-LRR resistance protein interactions constitutes the first step in resistance activation. Acts redundantly with salicylic acid to regulate resistance gene-mediated signaling. Triggers early plant defenses and hypersensitive response independently of PAD4, and then recruits PAD4 to potentiate plant defenses through the accumulation of salicylic acid. Nuclear localization is essential for basal and TNL-conditioned immunity and for reprogramming defense gene expression, while cytoplasmic EDS1 is required to induce a complete immune response. Heterodimerization with PAD4 and/or SGA101 is necessary for TNL-mediated effector-triggered immunity. Contributes to nonhost resistance against E.amylovora. Loss of EDS1-PAD4 interaction compromises basal but not TNL-triggered resistance. Necessary for systemic acquired resistance (SAR) signal generation and perception. Has no direct lipase activity. Putative lipase activity is dispensable for immune functions. This is Protein EDS1 from Arabidopsis thaliana (Mouse-ear cress).